The chain runs to 68 residues: Large ribosomal subunit protein uL29 (68 aa).

This sequence belongs to the universal ribosomal protein uL29 family.

In Streptococcus pneumoniae (strain JJA), this protein is Large ribosomal subunit protein uL29.